The chain runs to 294 residues: 4-hydroxy-tetrahydrodipicolinate synthase (294 aa).

Residue Ser-47 coordinates pyruvate. Catalysis depends on Tyr-135, which acts as the Proton donor/acceptor. The Schiff-base intermediate with substrate role is filled by Lys-163. A pyruvate-binding site is contributed by Ile-205.

Belongs to the DapA family. In terms of assembly, homotetramer; dimer of dimers.

The protein localises to the cytoplasm. It carries out the reaction L-aspartate 4-semialdehyde + pyruvate = (2S,4S)-4-hydroxy-2,3,4,5-tetrahydrodipicolinate + H2O + H(+). It functions in the pathway amino-acid biosynthesis; L-lysine biosynthesis via DAP pathway; (S)-tetrahydrodipicolinate from L-aspartate: step 3/4. Its function is as follows. Catalyzes the condensation of (S)-aspartate-beta-semialdehyde [(S)-ASA] and pyruvate to 4-hydroxy-tetrahydrodipicolinate (HTPA). The polypeptide is 4-hydroxy-tetrahydrodipicolinate synthase (Ralstonia nicotianae (strain ATCC BAA-1114 / GMI1000) (Ralstonia solanacearum)).